The primary structure comprises 124 residues: Large ribosomal subunit protein bL19 (124 aa).

This sequence belongs to the bacterial ribosomal protein bL19 family.

In terms of biological role, this protein is located at the 30S-50S ribosomal subunit interface and may play a role in the structure and function of the aminoacyl-tRNA binding site. The polypeptide is Large ribosomal subunit protein bL19 (Dinoroseobacter shibae (strain DSM 16493 / NCIMB 14021 / DFL 12)).